Here is a 401-residue protein sequence, read N- to C-terminus: Protein KlcB (401 aa).

The tract at residues Ala253–Arg311 is disordered.

This is Protein KlcB (klcB) from Escherichia coli.